The primary structure comprises 174 residues: Ribosome maturation factor RimM (174 aa).

A PRC barrel domain is found at 97–169 (PDTYYDHQLE…ILEIDPPDGL (73 aa)).

The protein belongs to the RimM family. In terms of assembly, binds ribosomal protein uS19.

The protein localises to the cytoplasm. An accessory protein needed during the final step in the assembly of 30S ribosomal subunit, possibly for assembly of the head region. Essential for efficient processing of 16S rRNA. May be needed both before and after RbfA during the maturation of 16S rRNA. It has affinity for free ribosomal 30S subunits but not for 70S ribosomes. The polypeptide is Ribosome maturation factor RimM (Mycobacterium ulcerans (strain Agy99)).